Here is a 261-residue protein sequence, read N- to C-terminus: tRNA pseudouridine synthase A 2 (261 aa).

D59 functions as the Nucleophile in the catalytic mechanism. Residue Y117 participates in substrate binding.

The protein belongs to the tRNA pseudouridine synthase TruA family. Homodimer.

It catalyses the reaction uridine(38/39/40) in tRNA = pseudouridine(38/39/40) in tRNA. Its function is as follows. Formation of pseudouridine at positions 38, 39 and 40 in the anticodon stem and loop of transfer RNAs. The chain is tRNA pseudouridine synthase A 2 from Desulfotalea psychrophila (strain LSv54 / DSM 12343).